The sequence spans 297 residues: Proline iminopeptidase (297 aa).

The AB hydrolase-1 domain occupies 26 to 131; sequence VLLLHGGPAM…GLLVSNMMAS (106 aa). The Nucleophile role is filled by Ser103. Residue Asp243 is part of the active site. The Proton donor role is filled by His270.

The protein belongs to the peptidase S33 family. Monomer.

The catalysed reaction is Release of N-terminal proline from a peptide.. Releases the N-terminal proline from various substrates. The polypeptide is Proline iminopeptidase (fpaP) (Flavobacterium johnsoniae (strain ATCC 17061 / DSM 2064 / JCM 8514 / BCRC 14874 / CCUG 350202 / NBRC 14942 / NCIMB 11054 / UW101) (Cytophaga johnsonae)).